A 302-amino-acid chain; its full sequence is Glycine--tRNA ligase alpha subunit (302 aa).

The protein belongs to the class-II aminoacyl-tRNA synthetase family. As to quaternary structure, tetramer of two alpha and two beta subunits.

The protein resides in the cytoplasm. It carries out the reaction tRNA(Gly) + glycine + ATP = glycyl-tRNA(Gly) + AMP + diphosphate. This chain is Glycine--tRNA ligase alpha subunit, found in Xanthomonas oryzae pv. oryzae (strain MAFF 311018).